The primary structure comprises 294 residues: Protein C3orf33 homolog (294 aa).

At A2 the chain carries N-acetylalanine. Residues 36-53 (LVQNISTGMAIAGIMLLI) traverse the membrane as a helical segment. The segment at 244-271 (KPAGADLGSTKDSYHDSRRRASGKGKDS) is disordered.

It localises to the membrane. May play a role in transcription regulation. The protein is Protein C3orf33 homolog of Mus musculus (Mouse).